Consider the following 447-residue polypeptide: Citrate synthase-like protein oryE (447 aa).

Active-site residues include His-331 and Asp-387.

It belongs to the citrate synthase family.

The protein operates within secondary metabolite biosynthesis. In terms of biological role, citrate synthase-like protein; part of the gene cluster that mediates the biosynthesis of oryzines, natural products with an unusual maleidride backbone. The two subunits of the fungal fatty acid synthase oryfasA and oryfasB probably form octenoic acid. This fatty acid is most likely activated by the acyl-CoA ligase oryP to give octenyl-CoA before the citrate synthase-like protein oryE catalyzes condensation with oxaloacetate to form tricarboxylic acid. The next steps of the pathways are conjectural, but a favorite possible route has been proposed, beginning with decarboxylation and concomitant dehydration by the decarboxylase oryM, followed by tautomerization, which may lead to the production of a diene intermediate. Reduction of this diene intermediate could give the known metabolite piliformic acid. On the pathway to oryzine B and oryzine A, however, hydroxylation of the diene by the alpha-ketoglutarate-dependent dioxygenase oryG and lactonisation by the lactonohydrolases oryH or oryL could give oryzine B directly. Finally, enoyl reduction by the dehydrogenase oryD would then convert oryzine B into oryzine A. The chain is Citrate synthase-like protein oryE from Aspergillus oryzae (strain ATCC 42149 / RIB 40) (Yellow koji mold).